A 190-amino-acid polypeptide reads, in one-letter code: Peptidoglycan recognition protein 1 (190 aa).

Positions 1–21 (MSRRYTPLAWVLLALLGLGAA) are cleaved as a signal peptide. At Gln22 the chain carries Pyrrolidone carboxylic acid. Disulfide bonds link Cys24–Cys148, Cys40–Cys85, and Cys61–Cys67. In terms of domain architecture, N-acetylmuramoyl-L-alanine amidase spans 46-174 (QPVRYVVVSH…RDVQQTLSPG (129 aa)).

It belongs to the N-acetylmuramoyl-L-alanine amidase 2 family. In terms of assembly, homodimer; disulfide-linked.

It localises to the secreted. The protein resides in the cytoplasmic granule. Innate immunity protein that plays several important functions in antimicrobial and antitumor defense systems. Acts as a pattern receptor that binds to murein peptidoglycans (PGN) of Gram-positive bacteria and thus provides bactericidal activity. Forms an equimolar complex with heat shock protein HSPA1A and induces programmed cell death through apoptosis and necroptosis in tumor cell lines by activating the TNFR1 receptor on the target cell membrane. In addition, acts in complex with the Ca(2+)-binding protein S100A4 as a chemoattractant able to induce lymphocyte movement. Mechanistically, this complex acts as a ligand of the chemotactic receptors CCR5 and CXCR3 which are present on the cells of the immune system. Promotes also the activation of lymphocytes that become able to kill virus-infected cells as well as tumor cells by modulating the spectrum of their target-cell specificity. Induction of cytotoxicity on monocyte surface requires interaction with TREM1 receptor. The protein is Peptidoglycan recognition protein 1 (PGLYRP1) of Bos indicus (Zebu).